Here is a 449-residue protein sequence, read N- to C-terminus: Asparagine--tRNA ligase (449 aa).

Belongs to the class-II aminoacyl-tRNA synthetase family. Homodimer.

It is found in the cytoplasm. It carries out the reaction tRNA(Asn) + L-asparagine + ATP = L-asparaginyl-tRNA(Asn) + AMP + diphosphate + H(+). This is Asparagine--tRNA ligase from Deinococcus geothermalis (strain DSM 11300 / CIP 105573 / AG-3a).